The chain runs to 670 residues: DNA topoisomerase 6 subunit B (670 aa).

Residues 1 to 30 (MAGDDLVETKKGSSKNSKDSNESKLKQKSP) are disordered. A compositionally biased stretch (basic and acidic residues) spans 7–25 (VETKKGSSKNSKDSNESKL). Residues asparagine 60, aspartate 160, 181–182 (TK), 190–197 (GKFGLGAK), and lysine 516 contribute to the ATP site.

The protein belongs to the TOP6B family. As to quaternary structure, homodimer. Heterotetramer of two TOP6A and two TOP6B subunits. Interacts with SPO11-2, but not with SPO11-1, RHL1 or BIN4. As to expression, highly expressed in leaves, stems, flowers and seedlings.

It is found in the nucleus. The enzyme catalyses ATP-dependent breakage, passage and rejoining of double-stranded DNA.. Its function is as follows. Component of the DNA topoisomerase VI involved in chromatin organization and progression of endoreduplication cycles. Relaxes both positive and negative superturns and exhibits a strong decatenase activity. The B subunit binds ATP. Involved in cell-elongation processes. This is DNA topoisomerase 6 subunit B from Arabidopsis thaliana (Mouse-ear cress).